We begin with the raw amino-acid sequence, 268 residues long: Hydroxyethylthiazole kinase (268 aa).

Methionine 45 contributes to the substrate binding site. ATP is bound by residues arginine 121 and threonine 167. Glycine 194 is a substrate binding site.

It belongs to the Thz kinase family. Requires Mg(2+) as cofactor.

It catalyses the reaction 5-(2-hydroxyethyl)-4-methylthiazole + ATP = 4-methyl-5-(2-phosphooxyethyl)-thiazole + ADP + H(+). It participates in cofactor biosynthesis; thiamine diphosphate biosynthesis; 4-methyl-5-(2-phosphoethyl)-thiazole from 5-(2-hydroxyethyl)-4-methylthiazole: step 1/1. Functionally, catalyzes the phosphorylation of the hydroxyl group of 4-methyl-5-beta-hydroxyethylthiazole (THZ). This is Hydroxyethylthiazole kinase from Bacillus cereus (strain Q1).